Here is a 129-residue protein sequence, read N- to C-terminus: Large ribosomal subunit protein bL12 (129 aa).

The protein belongs to the bacterial ribosomal protein bL12 family. As to quaternary structure, homodimer. Part of the ribosomal stalk of the 50S ribosomal subunit. Forms a multimeric L10(L12)X complex, where L10 forms an elongated spine to which 2 to 4 L12 dimers bind in a sequential fashion. Binds GTP-bound translation factors.

Forms part of the ribosomal stalk which helps the ribosome interact with GTP-bound translation factors. Is thus essential for accurate translation. The polypeptide is Large ribosomal subunit protein bL12 (Micrococcus luteus (strain ATCC 4698 / DSM 20030 / JCM 1464 / CCM 169 / CCUG 5858 / IAM 1056 / NBRC 3333 / NCIMB 9278 / NCTC 2665 / VKM Ac-2230) (Micrococcus lysodeikticus)).